The primary structure comprises 174 residues: Guided entry of tail-anchored proteins factor 1 (174 aa).

Residues 1-8 are Lumenal-facing; the sequence is MSASETDR. The chain crosses the membrane as a helical span at residues 9 to 29; the sequence is WAWLLVLSFVFGCNLLRILLP. Topologically, residues 30-99 are cytoplasmic; that stretch reads SLSSFISRVL…VKARTAQLAK (70 aa). The stretch at 39 to 94 forms a coiled coil; it reads LQKDAEQESQMRAEIQGMKQELSTVNMMDEFARYARLERKINKMTDKLKTHVKART. Positions 39–97 are interaction with GET3/TRC40; it reads LQKDAEQESQMRAEIQGMKQELSTVNMMDEFARYARLERKINKMTDKLKTHVKARTAQL. Residues 100-120 traverse the membrane as a helical segment; it reads IKWFISVAFYILQAALMISLI. The Lumenal portion of the chain corresponds to 121–148; it reads WKYYSVPVAVVPSKWITPLDRLVAFPTR. The chain crosses the membrane as a helical span at residues 149–169; that stretch reads VAGGIGITCWILVCNKVVAIV. Topologically, residues 170–174 are cytoplasmic; it reads LHPFS.

This sequence belongs to the WRB/GET1 family. Component of the Golgi to ER traffic (GET) complex, which is composed of GET1, CAMLG/GET2 and GET3. Within the complex, GET1 and CAMLG form a heterotetramer which is stabilized by phosphatidylinositol binding and which binds to the GET3 homodimer. Interacts with CAMLG/GET2 (via C-terminus). GET3 shows a higher affinity for CAMLG than for GET1.

The protein localises to the endoplasmic reticulum membrane. In terms of biological role, required for the post-translational delivery of tail-anchored (TA) proteins to the endoplasmic reticulum. Together with CAMLG/GET2, acts as a membrane receptor for soluble GET3/TRC40, which recognizes and selectively binds the transmembrane domain of TA proteins in the cytosol. Required to ensure correct topology and ER insertion of CAMLG. This is Guided entry of tail-anchored proteins factor 1 from Mus musculus (Mouse).